Reading from the N-terminus, the 169-residue chain is Cell division inhibitor SulA (169 aa).

The tract at residues 106-112 (ALRTGNY) is ftsZ binding. A lon protease binding region spans residues 162–169 (KIHSNLYH).

This sequence belongs to the SulA family. Interacts with FtsZ. Post-translationally, is rapidly cleaved and degraded by the Lon protease once DNA damage is repaired.

Functionally, component of the SOS system and an inhibitor of cell division. Accumulation of SulA causes rapid cessation of cell division and the appearance of long, non-septate filaments. In the presence of GTP, binds a polymerization-competent form of FtsZ in a 1:1 ratio, thus inhibiting FtsZ polymerization and therefore preventing it from participating in the assembly of the Z ring. This mechanism prevents the premature segregation of damaged DNA to daughter cells during cell division. The sequence is that of Cell division inhibitor SulA from Salmonella agona (strain SL483).